Here is a 345-residue protein sequence, read N- to C-terminus: Probable velvet family sexual development regulator LACBIDRAFT_317102 (345 aa).

Polar residues-rich tracts occupy residues 1-13 (MFTT…SYRS) and 24-38 (EIQN…NPPR). Disordered regions lie at residues 1 to 43 (MFTT…TRRR), 138 to 189 (ESWT…SPSS), and 310 to 345 (RKRR…SDED). The Velvet domain maps to 62 to 306 (GQTIRAELDE…ARWGVRLNIR (245 aa)). 2 stretches are compositionally biased toward low complexity: residues 141–158 (TSRS…PTLS) and 167–184 (SSPQ…ASTP). Positions 336–345 (SEDDEASDED) are enriched in acidic residues.

The protein belongs to the velvet family.

The protein localises to the nucleus. Functionally, velvet-domain-containing protein that probably acts as a positive regulator of sexual development. The sequence is that of Probable velvet family sexual development regulator LACBIDRAFT_317102 from Laccaria bicolor (strain S238N-H82 / ATCC MYA-4686) (Bicoloured deceiver).